Consider the following 1007-residue polypeptide: Sal-like protein 2 (1007 aa).

The segment at 1 to 33 (MSRRKQRKPQQLISDCEGPSASENGDASEEDHP) is disordered. The segment at 34-56 (QVCAKCCAQFTDPTEFLAHQNAC) adopts a C2H2-type 1; atypical zinc-finger fold. Disordered stretches follow at residues 59–121 (DPPV…GEES), 137–177 (GGGL…SGHL), 220–243 (PASP…PLFS), and 286–306 (PFSA…SPAL). Low complexity predominate over residues 70–80 (ENPNNSSASSE). The segment covering 99-108 (PPDSGSSVPT) has biased composition (polar residues). Over residues 151–171 (PLPPESTPAPPPPPPPPPPPG) the composition is skewed to pro residues. Residue Ser-243 is modified to Phosphoserine. 2 consecutive C2H2-type zinc fingers follow at residues 373 to 395 (HKCR…LRSH) and 401 to 423 (YKCN…FHRH). 2 disordered regions span residues 520–540 (KNKA…SGVA) and 610–629 (AASG…ASSG). 3 consecutive C2H2-type zinc fingers follow at residues 631–653 (NQCV…YGQH), 659–681 (FKCK…FVGH), and 691–713 (NSCP…VRMH). The interval 714 to 886 (LGGQIPNGGT…SALTPEGEAT (173 aa)) is disordered. The segment covering 734 to 744 (ENGSEQSTVSG) has biased composition (polar residues). A compositionally biased stretch (low complexity) spans 747-757 (SFPQQQSQQPS). Positions 758-782 (PEEELSEEEEEEDEEEEEDVTDEDS) are enriched in acidic residues. Phosphoserine occurs at positions 797, 802, and 806. Residues 803-812 (EEASGAEEEV) are compositionally biased toward acidic residues. The span at 862 to 871 (GKEEGGKPER) shows a compositional bias: basic and acidic residues. Residue Lys-911 forms a Glycyl lysine isopeptide (Lys-Gly) (interchain with G-Cter in ubiquitin) linkage. 2 consecutive C2H2-type zinc fingers follow at residues 911–933 (KACE…QKTH) and 940–963 (FTCV…LLAH).

The protein belongs to the sal C2H2-type zinc-finger protein family. As to expression, highest levels in adult brain (in different areas). Lower levels in heart; very low levels in kidney and pancreas. Expressed throughout the retina and lens vesicle as well as the periocular mesenchyme.

The protein localises to the nucleus. Functionally, probable transcription factor that plays a role in eye development before, during, and after optic fissure closure. The protein is Sal-like protein 2 (SALL2) of Homo sapiens (Human).